A 4017-amino-acid polypeptide reads, in one-letter code: Hybrid PKS-NRPS synthetase cghG (4017 aa).

A Ketosynthase family 3 (KS3) domain is found at 6-438 (QEPIAVIGMA…GTNAHAIIES (433 aa)). Residues C179, H318, and H358 each act as for beta-ketoacyl synthase activity in the active site. The segment at 549–869 (VFTGQGAQWP…GRNKNDVVEL (321 aa)) is malonyl-CoA:ACP transacylase (MAT) domain. The interval 936–1072 (NPILGRRCVE…ATLHVRFHEP (137 aa)) is N-terminal hotdog fold. A PKS/mFAS DH domain is found at 936–1243 (NPILGRRCVE…VKPFAAATAR (308 aa)). The dehydratase (DH) domain stretch occupies residues 937 to 1240 (PILGRRCVET…AVQVKPFAAA (304 aa)). The Proton acceptor; for dehydratase activity role is filled by H969. Positions 1087-1243 (LVKTDPGRLY…VKPFAAATAR (157 aa)) are C-terminal hotdog fold. D1147 acts as the Proton donor; for dehydratase activity in catalysis. The segment at 1398-1585 (VANVWIARMV…GVDTHCPVEK (188 aa)) is methyltransferase (MT) domain. Positions 2127-2300 (TYFLVGLSGE…XXXXXXXXXX (174 aa)) are ketoreductase (KR)domain. A Carrier 1 domain is found at 2423 to 2499 (AVVQDSLTEN…SLAEEAMAKI (77 aa)). S2458 carries the O-(pantetheine 4'-phosphoryl)serine modification. Disordered regions lie at residues 2547-2606 (VSEA…LQHR) and 2613-2632 (WAGS…AQRH). Polar residues predominate over residues 2548–2578 (SEASGVSATTPSTRAETDASSSPALVSTPGT). The tract at residues 2626–3020 (RRAAQRHETL…GDAMETEKLQ (395 aa)) is condensation. The interval 3053–3453 (EVIAQNPTAV…SGFLAIEGRI (401 aa)) is adenylation. The segment at 3567–3586 (PKTTTASTTADGTQPAQPLT) is disordered. A compositionally biased stretch (low complexity) spans 3569 to 3579 (TTTASTTADGT). Residues 3583-3661 (QPLTPTESRL…SMAALLDQAG (79 aa)) enclose the Carrier 2 domain. The interval 3588-3658 (TESRLATLWA…ELGSMAALLD (71 aa)) is thiolation. The residue at position 3621 (S3621) is an O-(pantetheine 4'-phosphoryl)serine. The interval 3696 to 3920 (VTGASGSLGK…DVGRLEDVAA (225 aa)) is reductase-like.

In the C-terminal section; belongs to the NRP synthetase family.

It catalyses the reaction (2S,4S)-4-hydroxy-4-methylglutamate + 8 malonyl-CoA + 3 S-adenosyl-L-methionine + ATP + 8 NADPH + 11 H(+) = (2S)-3-[(2S)-3,5-dioxo-4-[(2E,4R,6R,8E,10E,12E)-4,6,12-trimethyltetradeca-2,8,10,12-tetraenoyl]pyrrolidin-2-yl]-2-hydroxy-2-methylpropanoate + AMP + 3 S-adenosyl-L-homocysteine + 8 CO2 + diphosphate + 8 NADP(+) + 8 CoA + 6 H2O. It functions in the pathway secondary metabolite biosynthesis. Its function is as follows. Hybrid PKS-NRPS synthetase; part of the gene cluster that mediates the biosynthesis of the tetramic acid Sch210972, a potential anti-HIV fungal natural product that contains a decalin core. The PKS module of cghG together with the enoylreductase cghC catalyze the formation of the polyketide unit which is then conjugated to 4-hydroxyl-4-methyl glutamate (HMG) by the condensation domain of the cghG NRPS module. One unique structural feature of Sch210972 is the tetramic acid motif proposed to be derived from the non-proteinogenic amino acid HMG, by a Dieckmann-type condensation catalyzed by the reductase domain of cghG. The aldolase cghB catalyzes the aldol condensation of 2 molecules of pyruvic acid to yield the intermediate 4-hydroxyl-4-methyl-2-oxoglutarate (HMOG), which can then be stereoselectively transaminated by an unidentified enzyme to form HMG. The Diels-Alderase cghA then uses the Dieckmann product released by cghG as substrate and catalyzes the Diels-Alder cycloaddition to form the decalin ring of Sch210972. CghA also suppresses the nonenzymatic formation of the alternative stereoisomer. This Chaetomium globosum (strain ATCC 6205 / CBS 148.51 / DSM 1962 / NBRC 6347 / NRRL 1970) (Soil fungus) protein is Hybrid PKS-NRPS synthetase cghG.